Consider the following 450-residue polypeptide: UDP-N-acetylmuramoylalanine--D-glutamate ligase (450 aa).

Position 119–125 (119–125 (GSNGKTT)) interacts with ATP.

The protein belongs to the MurCDEF family.

Its subcellular location is the cytoplasm. The enzyme catalyses UDP-N-acetyl-alpha-D-muramoyl-L-alanine + D-glutamate + ATP = UDP-N-acetyl-alpha-D-muramoyl-L-alanyl-D-glutamate + ADP + phosphate + H(+). It functions in the pathway cell wall biogenesis; peptidoglycan biosynthesis. Functionally, cell wall formation. Catalyzes the addition of glutamate to the nucleotide precursor UDP-N-acetylmuramoyl-L-alanine (UMA). This chain is UDP-N-acetylmuramoylalanine--D-glutamate ligase, found in Streptococcus pneumoniae (strain JJA).